A 126-amino-acid chain; its full sequence is Glycine cleavage system H protein (126 aa).

The Lipoyl-binding domain occupies V22–K104. Position 63 is an N6-lipoyllysine (K63).

Belongs to the GcvH family. The glycine cleavage system is composed of four proteins: P, T, L and H. Requires (R)-lipoate as cofactor.

In terms of biological role, the glycine cleavage system catalyzes the degradation of glycine. The H protein shuttles the methylamine group of glycine from the P protein to the T protein. In Bacteroides fragilis (strain ATCC 25285 / DSM 2151 / CCUG 4856 / JCM 11019 / LMG 10263 / NCTC 9343 / Onslow / VPI 2553 / EN-2), this protein is Glycine cleavage system H protein.